Consider the following 615-residue polypeptide: Nif-specific regulatory protein (615 aa).

One can recognise a GAF domain in the interval 68-210 (RLEVTLANVV…MVANLVGQTV (143 aa)). The Sigma-54 factor interaction domain maps to 256–484 (IVGDSPLVKR…LENCIRRTAT (229 aa)). ATP contacts are provided by residues 284–291 (GESGTGKE) and 347–356 (AHGGTLFLDE). The tract at residues 485–572 (LAHDAVITPH…CPAVPPRQSE (88 aa)) is inter-domain linker. Residues Cys498 and Cys503 each contribute to the a divalent metal cation site. Residues 573–615 (KEQLLQAMERSGWVQAKAARLLNLTPRQVGYALRKYDIDIKRF) are C-terminal DNA-binding domain. A DNA-binding region (H-T-H motif) is located at residues 587–606 (QAKAARLLNLTPRQVGYALR).

As to quaternary structure, interacts with sigma-54.

In terms of biological role, required for activation of most nif operons, which are directly involved in nitrogen fixation. The chain is Nif-specific regulatory protein (nifA) from Azorhizobium caulinodans (strain ATCC 43989 / DSM 5975 / JCM 20966 / LMG 6465 / NBRC 14845 / NCIMB 13405 / ORS 571).